The sequence spans 384 residues: Urea transporter 1 (384 aa).

The segment at 1–23 (MDDNPTAVKLDQGGNQAPQGQGR) is disordered. The next 5 membrane-spanning stretches (helical) occupy residues 61–81 (ISQVVFVSNPISGILILVGLL), 85–105 (PWCALNGCVGTVVSTLTALLL), 111–131 (AITAGLQGYNATLVGILMAIY), 138–158 (FWWLLFPVSAMSMTCPIFSSA), and 169–189 (PVFTLPFNMALSMYLSATGHF). N-linked (GlcNAc...) asparagine glycosylation occurs at Asn-206. A run of 3 helical transmembrane segments spans residues 237-257 (GGIFLGAILLSSPLMCLHAAI), 279-299 (GLWGFNSSLACIAIGGMFMAL), and 327-347 (VVGLPSCTWPFCLATLLFLLL).

It belongs to the urea transporter family. As to quaternary structure, homotrimer; each subunit contains a pore through which urea permeates. Identified in a complex with STOM.

The protein localises to the cell membrane. It localises to the basolateral cell membrane. It catalyses the reaction urea(in) = urea(out). Its function is as follows. Mediates the transport of urea driven by a concentration gradient across the cell membranes of erythrocytes and the renal inner medullary collecting duct which is critical to the urinary concentrating mechanism. Facilitates water transport in erythrocytes. The chain is Urea transporter 1 (SLC14A1) from Ovis aries (Sheep).